The sequence spans 428 residues: Cell division protein FtsZ (428 aa).

GTP is bound by residues 73-77, 160-162, glutamate 191, arginine 195, and aspartate 239; these read GGGGN and GTG. The tract at residues 378-428 is disordered; the sequence is NAANARVVSAPPKRTPTQTPLTNSPAPTPEPKEKSGLDIPDFLQRRRPPKN. Polar residues predominate over residues 392 to 402; that stretch reads TPTQTPLTNSP.

This sequence belongs to the FtsZ family. Homodimer. Polymerizes to form a dynamic ring structure in a strictly GTP-dependent manner. Interacts directly with several other division proteins.

Its subcellular location is the cytoplasm. Its function is as follows. Essential cell division protein that forms a contractile ring structure (Z ring) at the future cell division site. The regulation of the ring assembly controls the timing and the location of cell division. One of the functions of the FtsZ ring is to recruit other cell division proteins to the septum to produce a new cell wall between the dividing cells. Binds GTP and shows GTPase activity. The sequence is that of Cell division protein FtsZ from Nostoc sp. (strain PCC 7120 / SAG 25.82 / UTEX 2576).